The sequence spans 608 residues: Chaperone protein HtpG (608 aa).

Residues 1-332 are a; substrate-binding; it reads MQFQTEVNQL…VEDLPLNVSR (332 aa). The segment at 333–536 is b; that stretch reads EILQENQILK…KNKPDFAMQQ (204 aa). The c stretch occupies residues 537–608; sequence LLKQMGQEQN…LTKIINKAFS (72 aa).

The protein belongs to the heat shock protein 90 family. As to quaternary structure, homodimer.

The protein localises to the cytoplasm. Functionally, molecular chaperone. Has ATPase activity. This is Chaperone protein HtpG from Campylobacter jejuni (strain RM1221).